Here is a 719-residue protein sequence, read N- to C-terminus: MDGMKLSFPPESPPLSVIVALSLSASPVTIDSSAAATTVPSFVFSDGRKLNGATVLLRYVGRSAKKLPDFYGNNAFDSSQIDEWVDYASVFSSGSEFENACGRVDKYLESSTFLVGHSLSIADVAIWSALAGTGQRWESLRKSKKYQSLVRWFNSILDEYSEVLNKVLATYVKKGSGKPVAAPKSKDSQQAVKGDGQDKGKPEVDLPEAEIGKVKLRFAPEPSGYLHIGHAKAALLNKYFAERYQGEVIVRFDDTNPAKESNEFVDNLVKDIGTLGIKYEKVTYTSDYFPELMDMAEKLMREGKAYVDDTPREQMQKERMDGIDSKCRNHSVEENLKLWKEMIAGSERGLQCCVRGKFNMQDPNKAMRDPVYYRCNPMSHHRIGDKYKIYPTYDFACPFVDSLEGITHALRSSEYHDRNAQYFKVLEDMGLRQVQLYEFSRLNLVFTLLSKRKLLWFVQTGLVDGWDDPRFPTVQGIVRRGLKIEALIQFILEQGASKNLNLMEWDKLWSINKRIIDPVCPRHTAVVAERRVLFTLTDGPDEPFVRMIPKHKKFEGAGEKATTFTKSIWLEEADASAISVGEEVTLMDWGNAIVKEITKDEEGRVTALSGVLNLQGSVKTTKLKLTWLPDTNELVNLTLTEFDYLITKKKLEDDDEVADFVNPNTKKETLALGDSNMRNLKCGDVIQLERKGYFRCDVPFVKSSKPIVLFSIPDGRAAK.

Position 93 (S93) interacts with ATP. The interval 176-205 (SGKPVAAPKSKDSQQAVKGDGQDKGKPEVD) is disordered. A compositionally biased stretch (basic and acidic residues) spans 195–204 (DGQDKGKPEV). 217-219 (RFA) provides a ligand contact to L-glutamate. Residues 220 to 230 (PEPSGYLHIGH) carry the 'HIGH' region motif. H227 provides a ligand contact to ATP. L-glutamate contacts are provided by residues 393 to 397 (YDFAC) and R411. Residues E414 and 448 to 452 (LLSKR) contribute to the ATP site. The short motif at 448–452 (LLSKR) is the 'KMSKS' region element.

It belongs to the class-I aminoacyl-tRNA synthetase family. Glutamate--tRNA ligase type 2 subfamily. As to quaternary structure, interacts with GLN2, COL4 and RPP13L4/ZAR1.

Its subcellular location is the cytoplasm. The protein resides in the cytosol. It carries out the reaction tRNA(Glu) + L-glutamate + ATP = L-glutamyl-tRNA(Glu) + AMP + diphosphate. In terms of biological role, catalyzes the attachment of glutamate to tRNA(Glu) in a two-step reaction: glutamate is first activated by ATP to form Glu-AMP and then transferred to the acceptor end of tRNA(Glu). The chain is Glutamate--tRNA ligase, cytoplasmic from Arabidopsis thaliana (Mouse-ear cress).